The chain runs to 346 residues: uncharacterized protein (346 aa).

Position 65 (His-65) interacts with Zn(2+). Asp-67 is a catalytic residue. Residue Asp-89 participates in Zn(2+) binding. The Proton acceptor role is filled by Glu-115. Glu-116, Glu-145, and His-319 together coordinate Zn(2+).

The protein belongs to the peptidase M20A family. Requires Zn(2+) as cofactor. The cofactor is Co(2+).

This is an uncharacterized protein from Methanocaldococcus jannaschii (strain ATCC 43067 / DSM 2661 / JAL-1 / JCM 10045 / NBRC 100440) (Methanococcus jannaschii).